The following is a 61-amino-acid chain: Large ribosomal subunit protein bL28 (61 aa).

The protein belongs to the bacterial ribosomal protein bL28 family.

The polypeptide is Large ribosomal subunit protein bL28 (rpmB) (Geobacillus stearothermophilus (Bacillus stearothermophilus)).